A 426-amino-acid polypeptide reads, in one-letter code: Serine hydroxymethyltransferase (426 aa).

(6S)-5,6,7,8-tetrahydrofolate is bound by residues L115 and 119-121 (GHI). The residue at position 225 (K225) is an N6-(pyridoxal phosphate)lysine.

The protein belongs to the SHMT family. Homodimer. It depends on pyridoxal 5'-phosphate as a cofactor.

The protein localises to the cytoplasm. It functions in the pathway amino-acid biosynthesis; glycine biosynthesis; glycine from L-serine: step 1/1. In terms of biological role, catalyzes the reversible interconversion of serine and glycine with a modified folate serving as the one-carbon carrier. Also exhibits a pteridine-independent aldolase activity toward beta-hydroxyamino acids, producing glycine and aldehydes, via a retro-aldol mechanism. This Thermoplasma acidophilum (strain ATCC 25905 / DSM 1728 / JCM 9062 / NBRC 15155 / AMRC-C165) protein is Serine hydroxymethyltransferase.